A 150-amino-acid chain; its full sequence is Probable NADH dehydrogenase [ubiquinone] 1 alpha subcomplex subunit 5 (150 aa).

It belongs to the complex I NDUFA5 subunit family. Complex I is composed of 45 different subunits.

It is found in the mitochondrion inner membrane. Functionally, accessory subunit of the mitochondrial membrane respiratory chain NADH dehydrogenase (Complex I), that is believed not to be involved in catalysis. Complex I functions in the transfer of electrons from NADH to the respiratory chain. The immediate electron acceptor for the enzyme is believed to be ubiquinone. This Caenorhabditis elegans protein is Probable NADH dehydrogenase [ubiquinone] 1 alpha subcomplex subunit 5.